The sequence spans 165 residues: MSCDGGKPAPAKLGDEQLAELREIFRSFDQNKDGSLTELELGSLLRSLGLKPSQDQLDTLIQKADRNNNGLVEFSEFVALVEPDLVKCPYTDDQLKAIFRMFDRDGNGYITAAELAHSMAKLGHALTAEELTGMIKEADRDGDGCIDFQEFVQAITSAAFDNAWG.

4 EF-hand domains span residues 16–51, 52–87, 90–125, and 126–161; these read EQLAELREIFRSFDQNKDGSLTELELGSLLRSLGLK, PSQDQLDTLIQKADRNNNGLVEFSEFVALVEPDLVK, YTDDQLKAIFRMFDRDGNGYITAAELAHSMAKLGHA, and LTAEELTGMIKEADRDGDGCIDFQEFVQAITSAAFD. Positions 29, 31, 33, 35, 40, 65, 67, 69, 76, 103, 105, 107, 109, 114, 139, 141, 143, 145, and 150 each coordinate Ca(2+).

In terms of assembly, calcium and pH-dependent interaction with NHX1 (increases when pH decreases, better at pH 5.5 than at pH 7.5). Also interacts with the CPB protein At2g18750.

The protein localises to the vacuole. Functionally, potential calcium sensor that modulates ion selectivity of NHX1. This is Probable calcium-binding protein CML18 (CML18) from Arabidopsis thaliana (Mouse-ear cress).